Here is a 446-residue protein sequence, read N- to C-terminus: GRAM domain-containing protein 2B (446 aa).

N-acetylmethionine is present on Met-1. The interval 1–120 (MVKKRLPSND…RKKSSSSSQY (120 aa)) is disordered. Residues 29–43 (SRSSTDSPSSVFFSS) show a composition bias toward low complexity. Residues 95-113 (DKNDCKTESKNDPKTERKK) show a composition bias toward basic and acidic residues. The 68-residue stretch at 124–191 (MHFHKLFLSV…FSVTLIKKTK (68 aa)) folds into the GRAM domain. The span at 234–247 (TSVGNSPNPSSAEN) shows a compositional bias: polar residues. The segment at 234–253 (TSVGNSPNPSSAENSFRADR) is disordered. Residues Ser-239, Ser-256, and Ser-266 each carry the phosphoserine modification. The interval 276–298 (RQDMEGYSSSGSQTPESENSRDF) is disordered. The span at 282–292 (YSSSGSQTPES) shows a compositional bias: polar residues.

In Pongo abelii (Sumatran orangutan), this protein is GRAM domain-containing protein 2B (GRAMD2B).